The chain runs to 87 residues: Translation initiation factor IF-1 2 (87 aa).

The S1-like domain maps to Met1–Thr72. Residues Gly65–Arg87 are disordered.

It belongs to the IF-1 family. Component of the 30S ribosomal translation pre-initiation complex which assembles on the 30S ribosome in the order IF-2 and IF-3, IF-1 and N-formylmethionyl-tRNA(fMet); mRNA recruitment can occur at any time during PIC assembly.

Its subcellular location is the cytoplasm. In terms of biological role, one of the essential components for the initiation of protein synthesis. Stabilizes the binding of IF-2 and IF-3 on the 30S subunit to which N-formylmethionyl-tRNA(fMet) subsequently binds. Helps modulate mRNA selection, yielding the 30S pre-initiation complex (PIC). Upon addition of the 50S ribosomal subunit IF-1, IF-2 and IF-3 are released leaving the mature 70S translation initiation complex. The polypeptide is Translation initiation factor IF-1 2 (Nitratidesulfovibrio vulgaris (strain ATCC 29579 / DSM 644 / CCUG 34227 / NCIMB 8303 / VKM B-1760 / Hildenborough) (Desulfovibrio vulgaris)).